Reading from the N-terminus, the 306-residue chain is Methionyl-tRNA formyltransferase (306 aa).

Residue S109 to P112 coordinates (6S)-5,6,7,8-tetrahydrofolate.

The protein belongs to the Fmt family.

The enzyme catalyses L-methionyl-tRNA(fMet) + (6R)-10-formyltetrahydrofolate = N-formyl-L-methionyl-tRNA(fMet) + (6S)-5,6,7,8-tetrahydrofolate + H(+). Functionally, attaches a formyl group to the free amino group of methionyl-tRNA(fMet). The formyl group appears to play a dual role in the initiator identity of N-formylmethionyl-tRNA by promoting its recognition by IF2 and preventing the misappropriation of this tRNA by the elongation apparatus. The protein is Methionyl-tRNA formyltransferase of Herpetosiphon aurantiacus (strain ATCC 23779 / DSM 785 / 114-95).